The chain runs to 767 residues: Photosystem I P700 chlorophyll a apoprotein A1 (767 aa).

Helical transmembrane passes span 72 to 95, 158 to 181, 197 to 221, 305 to 323, 364 to 387, 403 to 429, 451 to 473, and 548 to 566; these read IFSA…FHGA, LMSL…FHYH, LNHH…HVSL, IAHH…GHMY, WHAQ…QHMY, IGLF…IAMI, AIIS…LYVH, and FMVH…LILL. The [4Fe-4S] cluster site is built by cysteine 590 and cysteine 599. Helical transmembrane passes span 606–627 and 681–703; these read HVFL…HFSW and TSAY…MFLF. Histidine 692 contacts chlorophyll a'. Residues methionine 700 and tyrosine 708 each contribute to the chlorophyll a site. Tryptophan 709 contacts phylloquinone. The helical transmembrane segment at 741-761 threads the bilayer; it reads AVGVAHYLLGGIATTWAFFHA.

Belongs to the PsaA/PsaB family. In terms of assembly, the PsaA/B heterodimer binds the P700 chlorophyll special pair and subsequent electron acceptors. PSI consists of a core antenna complex that captures photons, and an electron transfer chain that converts photonic excitation into a charge separation. The cyanobacterial PSI reaction center is composed of one copy each of PsaA,B,C,D,E,F,I,J,K,L,M and X, and forms trimeric complexes. Requires PSI electron transfer chain: 5 chlorophyll a, 1 chlorophyll a', 2 phylloquinones and 3 4Fe-4S clusters. PSI core antenna: 90 chlorophyll a, 22 carotenoids, 3 phospholipids and 1 galactolipid. P700 is a chlorophyll a/chlorophyll a' dimer, A0 is one or more chlorophyll a, A1 is one or both phylloquinones and FX is a shared 4Fe-4S iron-sulfur center. as cofactor.

Its subcellular location is the cellular thylakoid membrane. The catalysed reaction is reduced [plastocyanin] + hnu + oxidized [2Fe-2S]-[ferredoxin] = oxidized [plastocyanin] + reduced [2Fe-2S]-[ferredoxin]. Functionally, psaA and PsaB bind P700, the primary electron donor of photosystem I (PSI), as well as the electron acceptors A0, A1 and FX. PSI is a plastocyanin/cytochrome c6-ferredoxin oxidoreductase, converting photonic excitation into a charge separation, which transfers an electron from the donor P700 chlorophyll pair to the spectroscopically characterized acceptors A0, A1, FX, FA and FB in turn. Oxidized P700 is reduced on the lumenal side of the thylakoid membrane by plastocyanin or cytochrome c6. The chain is Photosystem I P700 chlorophyll a apoprotein A1 from Synechococcus sp. (strain CC9311).